Here is a 393-residue protein sequence, read N- to C-terminus: S-adenosylmethionine synthase (393 aa).

H16 is an ATP binding site. Position 18 (D18) interacts with Mg(2+). E44 is a binding site for K(+). L-methionine is bound by residues E57 and Q100. The flexible loop stretch occupies residues 100 to 110 (QSNDIAQGVDH). ATP-binding positions include 167–169 (DAK), 238–239 (RF), D247, 253–254 (RK), A270, and K274. D247 serves as a coordination point for L-methionine. K278 contacts L-methionine.

The protein belongs to the AdoMet synthase family. In terms of assembly, homotetramer; dimer of dimers. Mg(2+) is required as a cofactor. K(+) serves as cofactor.

It localises to the cytoplasm. The enzyme catalyses L-methionine + ATP + H2O = S-adenosyl-L-methionine + phosphate + diphosphate. The protein operates within amino-acid biosynthesis; S-adenosyl-L-methionine biosynthesis; S-adenosyl-L-methionine from L-methionine: step 1/1. Functionally, catalyzes the formation of S-adenosylmethionine (AdoMet) from methionine and ATP. The overall synthetic reaction is composed of two sequential steps, AdoMet formation and the subsequent tripolyphosphate hydrolysis which occurs prior to release of AdoMet from the enzyme. This Polaromonas sp. (strain JS666 / ATCC BAA-500) protein is S-adenosylmethionine synthase.